We begin with the raw amino-acid sequence, 200 residues long: 3-isopropylmalate dehydratase small subunit (200 aa).

The protein belongs to the LeuD family. LeuD type 1 subfamily. In terms of assembly, heterodimer of LeuC and LeuD.

It catalyses the reaction (2R,3S)-3-isopropylmalate = (2S)-2-isopropylmalate. Its pathway is amino-acid biosynthesis; L-leucine biosynthesis; L-leucine from 3-methyl-2-oxobutanoate: step 2/4. In terms of biological role, catalyzes the isomerization between 2-isopropylmalate and 3-isopropylmalate, via the formation of 2-isopropylmaleate. The chain is 3-isopropylmalate dehydratase small subunit from Actinobacillus succinogenes (strain ATCC 55618 / DSM 22257 / CCUG 43843 / 130Z).